The following is an 875-amino-acid chain: SPbeta prophage-derived uncharacterized protein YomG (875 aa).

Positions 351–381 (AKKAEISRINSQITNISQEIEKLKDRLSMDK) form a coiled coil. The 112-residue stretch at 537–648 (PVANPTILNN…SIDSSGRILS (112 aa)) folds into the Fibronectin type-III domain.

The sequence is that of SPbeta prophage-derived uncharacterized protein YomG (yomG) from Bacillus subtilis (strain 168).